A 204-amino-acid chain; its full sequence is Probable chorismate pyruvate-lyase (204 aa).

Arg75, Leu113, and Glu160 together coordinate substrate.

This sequence belongs to the UbiC family.

The protein resides in the cytoplasm. It carries out the reaction chorismate = 4-hydroxybenzoate + pyruvate. Its pathway is cofactor biosynthesis; ubiquinone biosynthesis. Its function is as follows. Removes the pyruvyl group from chorismate, with concomitant aromatization of the ring, to provide 4-hydroxybenzoate (4HB) for the ubiquinone pathway. This chain is Probable chorismate pyruvate-lyase, found in Alcanivorax borkumensis (strain ATCC 700651 / DSM 11573 / NCIMB 13689 / SK2).